The chain runs to 513 residues: Ribonuclease Y (513 aa).

Residues 6–26 traverse the membrane as a helical segment; the sequence is YIIIAVVIIIICVILGLYVVD. The tract at residues 35–59 is disordered; it reads EASKEARRLKEEAERDAEAKKKEAI. Residues 203-288 form the KH domain; sequence TVHVVNLPND…EMVEKAKKEV (86 aa). The 94-residue stretch at 329 to 422 folds into the HD domain; sequence VLKHSIEVSH…VQAADAISAA (94 aa).

This sequence belongs to the RNase Y family.

Its subcellular location is the cell membrane. Functionally, endoribonuclease that initiates mRNA decay. The polypeptide is Ribonuclease Y (Clostridium botulinum (strain Okra / Type B1)).